The primary structure comprises 407 residues: Accessory Sec system protein translocase subunit SecY2 (407 aa).

Transmembrane regions (helical) follow at residues 13 to 33 (FLWT…TLPF), 65 to 85 (FFSI…MFTV), 104 to 124 (MLLT…NLPL), 133 to 153 (GTIV…LIWL), 158 to 178 (SSMG…SYIP), 192 to 212 (PLIL…AVLV), 248 to 268 (IMYA…LLFF), 287 to 307 (IPWF…FAFI), 345 to 365 (FAFV…LLIF), and 370 to 390 (YMRL…VFSI).

This sequence belongs to the SecY/SEC61-alpha family. SecY2 subfamily. In terms of assembly, may form heterotrimers with SecE and SecG subunits (Potential). Component of the accessory SecA2/SecY2 protein translocase complex required to export cell wall protein GspB.

It localises to the cell membrane. Functionally, the central subunit of a protein translocation channel (Potential). Part of the accessory SecA2/SecY2 system specifically required to export GspB, a serine-rich repeat cell wall protein encoded upstream in the same operon. This is Accessory Sec system protein translocase subunit SecY2 from Streptococcus gordonii.